Consider the following 103-residue polypeptide: ATP synthase subunit H, mitochondrial (103 aa).

Residues 1–26 constitute a mitochondrion transit peptide; sequence MSRILKSLSRSYSTTSPRLYVDVVQG.

Belongs to the ATPase h subunit family. In terms of assembly, F-type ATPases have 2 components, CF(1) - the catalytic core - and CF(0) - the membrane proton channel.

It localises to the mitochondrion. It is found in the mitochondrion inner membrane. Mitochondrial membrane ATP synthase (F(1)F(0) ATP synthase or Complex V) produces ATP from ADP in the presence of a proton gradient across the membrane which is generated by electron transport complexes of the respiratory chain. F-type ATPases consist of two structural domains, F(1) - containing the extramembraneous catalytic core and F(0) - containing the membrane proton channel, linked together by a central stalk and a peripheral stalk. During catalysis, ATP synthesis in the catalytic domain of F(1) is coupled via a rotary mechanism of the central stalk subunits to proton translocation. Part of the complex F(0) domain. Minor subunit located with subunit a in the membrane. The polypeptide is ATP synthase subunit H, mitochondrial (atp14) (Schizosaccharomyces pombe (strain 972 / ATCC 24843) (Fission yeast)).